A 61-amino-acid polypeptide reads, in one-letter code: Cytotoxin 3 (61 aa).

4 cysteine pairs are disulfide-bonded: Cys3–Cys22, Cys15–Cys39, Cys43–Cys54, and Cys55–Cys60.

The protein belongs to the three-finger toxin family. Short-chain subfamily. Type IB cytotoxin sub-subfamily. In terms of tissue distribution, expressed by the venom gland.

The protein resides in the secreted. This protein lyses red blood cells and has cardiotoxic and hypotensive activities. This chain is Cytotoxin 3, found in Hemachatus haemachatus (Rinkhals).